The sequence spans 214 residues: Non-structural protein NP-1 (214 aa).

Disordered stretches follow at residues methionine 1–asparagine 85 and glutamate 192–asparagine 214. Basic residues predominate over residues serine 33 to glycine 43. The segment covering glutamate 44–glutamine 55 has biased composition (basic and acidic residues). Over residues aspartate 56–alanine 71 the composition is skewed to polar residues. Positions glutamate 192–methionine 201 are enriched in acidic residues.

Belongs to the Bocaparvovirus Non-structural protein NP-1 family.

It is found in the host nucleus. Required for the expression of the capsid proteins. Performs the splicing and internal polyadenylation of the viral capsid-encoding mRNA precursor, which allows its maturation and expression. Transactivates the viral promoter. The polypeptide is Non-structural protein NP-1 (NP1) (Human bocavirus 4 (HBoV4)).